The following is a 205-amino-acid chain: Inactive ribonuclease-like protein 9 (205 aa).

The N-terminal stretch at 1 to 24 (MMLITTHSLPLLLLLLQLWQPLQF) is a signal peptide. Disulfide bonds link Cys97–Cys152, Cys115–Cys167, and Cys122–Cys129. N-linked (GlcNAc...) asparagine glycans are attached at residues Asn130 and Asn142.

The protein belongs to the pancreatic ribonuclease family.

Its subcellular location is the secreted. In terms of biological role, does not exhibit any ribonuclease activity. This chain is Inactive ribonuclease-like protein 9 (RNASE9), found in Cebus albifrons (White-fronted capuchin).